The primary structure comprises 495 residues: EF-hand calcium-binding domain-containing protein 14 (495 aa).

Disordered regions lie at residues 1–50 (MKKR…EEEE) and 381–404 (TNKP…FTSK). At serine 17 the chain carries Phosphoserine. Over residues 18–31 (RRKKPKKGPSSHRL) the composition is skewed to basic residues. Positions 37–50 (PDSDSESSSEEEEE) are enriched in acidic residues. 2 EF-hand domains span residues 434 to 463 (SSTE…WTSL) and 464 to 495 (GSAM…ALGI). Aspartate 477, aspartate 479, aspartate 481, arginine 483, and glutamate 488 together coordinate Ca(2+).

This chain is EF-hand calcium-binding domain-containing protein 14 (EFCAB14), found in Homo sapiens (Human).